Consider the following 393-residue polypeptide: Elongation factor Tu (393 aa).

Residues 10–203 (KPHVNIGTIG…AVDEFIPEPL (194 aa)) form the tr-type G domain. The segment at 19–26 (GHVDHGKT) is G1. GTP is bound at residue 19–26 (GHVDHGKT). T26 serves as a coordination point for Mg(2+). The tract at residues 60 to 64 (GITIS) is G2. The G3 stretch occupies residues 81 to 84 (DCPG). GTP is bound by residues 81–85 (DCPGH) and 136–139 (NKVD). Residues 136–139 (NKVD) are G4. The G5 stretch occupies residues 173–175 (SAL).

This sequence belongs to the TRAFAC class translation factor GTPase superfamily. Classic translation factor GTPase family. EF-Tu/EF-1A subfamily. As to quaternary structure, monomer.

Its subcellular location is the cytoplasm. It catalyses the reaction GTP + H2O = GDP + phosphate + H(+). Functionally, GTP hydrolase that promotes the GTP-dependent binding of aminoacyl-tRNA to the A-site of ribosomes during protein biosynthesis. The protein is Elongation factor Tu of Chlorobium phaeobacteroides (strain DSM 266 / SMG 266 / 2430).